Here is a 314-residue protein sequence, read N- to C-terminus: N-acyl-aromatic-L-amino acid amidohydrolase (carboxylate-forming) B (314 aa).

2 residues coordinate Zn(2+): His-19 and Glu-22. Substrate-binding positions include Arg-63 and 70-71 (NR). Residue His-116 participates in Zn(2+) binding. Residues Glu-178 and Tyr-289 each coordinate substrate.

This sequence belongs to the AspA/AstE family. Aspartoacylase subfamily. As to quaternary structure, homotetramer. Zn(2+) serves as cofactor.

It localises to the apical cell membrane. Its subcellular location is the cytoplasm. It carries out the reaction an N-acyl-aromatic L-alpha-amino acid + H2O = an aromatic L-alpha-amino acid + a carboxylate. It catalyses the reaction an N-acetyl-L-cysteine-S-conjugate + H2O = an S-substituted L-cysteine + acetate. Plays an important role in deacetylating mercapturic acids in kidney proximal tubules. The polypeptide is N-acyl-aromatic-L-amino acid amidohydrolase (carboxylate-forming) B (acy3.2) (Danio rerio (Zebrafish)).